Consider the following 576-residue polypeptide: Arginine--tRNA ligase (576 aa).

The 'HIGH' region motif lies at 122-132 (PNVAKQMHVGH).

This sequence belongs to the class-I aminoacyl-tRNA synthetase family. In terms of assembly, monomer.

The protein resides in the cytoplasm. The catalysed reaction is tRNA(Arg) + L-arginine + ATP = L-arginyl-tRNA(Arg) + AMP + diphosphate. In Yersinia pseudotuberculosis serotype O:1b (strain IP 31758), this protein is Arginine--tRNA ligase.